The chain runs to 368 residues: tRNA(Met) cytidine acetate ligase (368 aa).

Residues isoleucine 7 to leucine 20, glycine 96, asparagine 152, and arginine 175 each bind ATP.

This sequence belongs to the TmcAL family.

The protein resides in the cytoplasm. It carries out the reaction cytidine(34) in elongator tRNA(Met) + acetate + ATP = N(4)-acetylcytidine(34) in elongator tRNA(Met) + AMP + diphosphate. Its function is as follows. Catalyzes the formation of N(4)-acetylcytidine (ac(4)C) at the wobble position of elongator tRNA(Met), using acetate and ATP as substrates. First activates an acetate ion to form acetyladenylate (Ac-AMP) and then transfers the acetyl group to tRNA to form ac(4)C34. This is tRNA(Met) cytidine acetate ligase from Streptococcus pyogenes serotype M49 (strain NZ131).